The chain runs to 75 residues: Dermaseptin-A3 (75 aa).

Positions 1–22 are cleaved as a signal peptide; it reads MAFLKKSLFLVLLLGLISLSIC. A propeptide spanning residues 23-43 is cleaved from the precursor; it reads EEEKRENEVEEEQEDDEQSEL. Residue Gln-72 is modified to Glutamine amide. Residues 74–75 constitute a propeptide that is removed on maturation; that stretch reads EQ.

It belongs to the frog skin active peptide (FSAP) family. Dermaseptin subfamily. As to expression, expressed by the skin glands.

It localises to the secreted. Functionally, possesses a potent antimicrobial activity against Gram-positive and Gram-negative bacteria. Probably acts by disturbing membrane functions with its amphipathic structure. The chain is Dermaseptin-A3 from Agalychnis annae (Blue-sided leaf frog).